We begin with the raw amino-acid sequence, 577 residues long: Cell adhesion molecule CEACAM20 (577 aa).

Positions 1–30 (MELAGFHCCSWTVILLSALLPTTWRPPAAA) are cleaved as a signal peptide. The Extracellular segment spans residues 31–430 (HFIHRADLLS…LQSSSMSPGA (400 aa)). 4 Ig-like C2-type domains span residues 48 to 137 (PLAK…ASLT), 142 to 223 (PDPV…TNLS), 239 to 324 (PNIE…LKLT), and 329 to 415 (PDQV…ASVL). A disulfide bridge connects residues cysteine 72 and cysteine 120. N-linked (GlcNAc...) asparagine glycosylation is found at asparagine 78 and asparagine 102. Disulfide bonds link cysteine 259/cysteine 307 and cysteine 358/cysteine 399. Asparagine 289 carries N-linked (GlcNAc...) asparagine glycosylation. A helical membrane pass occupies residues 431 to 451 (IAGIVIGILVAIALAIGLGYF). The Cytoplasmic segment spans residues 452 to 577 (LYSTKDRWTR…SLYCKITPSA (126 aa)). Residues 461–568 (RRRSASDTTS…YEKLLNSNHS (108 aa)) are disordered. The segment covering 474–484 (IPPTSVMQSTP) has biased composition (polar residues). Basic and acidic residues predominate over residues 516 to 526 (DSPEQFYEKKP). A compositionally biased stretch (pro residues) spans 536–551 (KPLPQIPKQPLMPPGP). Phosphotyrosine occurs at positions 559 and 570.

Belongs to the immunoglobulin superfamily. CEA family. In terms of assembly, interacts (via extracellular domain) with PTPRH (via extracellular domain); the interaction dephosphorylates CEACAM20. Interacts (phosphorylated form) with SYK (via SH2 domains); the interaction further enhances CEACAM20 phosphorylation. Phosphorylated on tyrosine residues by SYK, SRC and FYN in vitro. As to expression, strongly expressed in the small intestine and colon (at protein level). Minimal expression in other tissues (at protein level). Highly expressed in cecum, colon, ileum, jejunum, and testis, and also detected at lower levels in salivary gland and thymus.

Its subcellular location is the cell projection. The protein localises to the microvillus membrane. The protein resides in the apical cell membrane. Together with the tyrosine-protein kinase SYK, enhances production of the cytokine CXCL8/IL-8 via the NFKB pathway and may thus have a role in the intestinal immune response. This chain is Cell adhesion molecule CEACAM20, found in Mus musculus (Mouse).